The sequence spans 205 residues: MSNNNNEAQQPVESTNVESQQNVVQSDCPVVNENNDNNNNNNNNNNNNNNNNNNNNNNNNSNNNNNSSNNENNENNENNSCEKSEQEKPKEPEEPVQEEKSKEPCDQQKVKENEPAEEKETEPAAPVEPENPLSNDSAASEKLQEQHQQQNHEPQQTSNGESNEADANESENKKRSIDEAGDIKDGKKRKVETVETSDPAQQVEA.

Positions 1-25 (MSNNNNEAQQPVESTNVESQQNVVQ) are enriched in polar residues. The disordered stretch occupies residues 1-205 (MSNNNNEAQQ…TSDPAQQVEA (205 aa)). The span at 32–79 (NENNDNNNNNNNNNNNNNNNNNNNNNNNNSNNNNNSSNNENNENNENN) shows a compositional bias: low complexity. A compositionally biased stretch (basic and acidic residues) spans 80–122 (SCEKSEQEKPKEPEEPVQEEKSKEPCDQQKVKENEPAEEKETE). Composition is skewed to low complexity over residues 123-132 (PAAPVEPENP) and 146-162 (QHQQQNHEPQQTSNGES). Over residues 170–185 (SENKKRSIDEAGDIKD) the composition is skewed to basic and acidic residues. The segment covering 194-205 (VETSDPAQQVEA) has biased composition (polar residues).

This is an uncharacterized protein from Dictyostelium discoideum (Social amoeba).